Reading from the N-terminus, the 265-residue chain is Cytochrome c oxidase subunit 3 (265 aa).

7 helical membrane passes run 16–36 (PWPI…VMYM), 41–61 (GGAT…FVWW), 81–101 (GPRY…FAFF), 137–157 (TPIL…ILAG), 162–182 (AVYA…FQGM), 200–220 (FFLA…FLII), and 245–265 (WHFV…WGGI).

Belongs to the cytochrome c oxidase subunit 3 family. As to quaternary structure, component of the cytochrome c oxidase (complex IV, CIV), a multisubunit enzyme composed of a catalytic core of 3 subunits and several supernumerary subunits. The complex exists as a monomer or a dimer and forms supercomplexes (SCs) in the inner mitochondrial membrane with ubiquinol-cytochrome c oxidoreductase (cytochrome b-c1 complex, complex III, CIII).

It is found in the mitochondrion inner membrane. The enzyme catalyses 4 Fe(II)-[cytochrome c] + O2 + 8 H(+)(in) = 4 Fe(III)-[cytochrome c] + 2 H2O + 4 H(+)(out). Functionally, component of the cytochrome c oxidase, the last enzyme in the mitochondrial electron transport chain which drives oxidative phosphorylation. The respiratory chain contains 3 multisubunit complexes succinate dehydrogenase (complex II, CII), ubiquinol-cytochrome c oxidoreductase (cytochrome b-c1 complex, complex III, CIII) and cytochrome c oxidase (complex IV, CIV), that cooperate to transfer electrons derived from NADH and succinate to molecular oxygen, creating an electrochemical gradient over the inner membrane that drives transmembrane transport and the ATP synthase. Cytochrome c oxidase is the component of the respiratory chain that catalyzes the reduction of oxygen to water. Electrons originating from reduced cytochrome c in the intermembrane space (IMS) are transferred via the dinuclear copper A center (CU(A)) of subunit 2 and heme A of subunit 1 to the active site in subunit 1, a binuclear center (BNC) formed by heme A3 and copper B (CU(B)). The BNC reduces molecular oxygen to 2 water molecules using 4 electrons from cytochrome c in the IMS and 4 protons from the mitochondrial matrix. This Vicia faba (Broad bean) protein is Cytochrome c oxidase subunit 3 (COX3).